Reading from the N-terminus, the 505-residue chain is Histidine ammonia-lyase (505 aa).

A cross-link (5-imidazolinone (Ala-Gly)) is located at residues 141–143; it reads ASG. Residue Ser142 is modified to 2,3-didehydroalanine (Ser).

The protein belongs to the PAL/histidase family. Contains an active site 4-methylidene-imidazol-5-one (MIO), which is formed autocatalytically by cyclization and dehydration of residues Ala-Ser-Gly.

It is found in the cytoplasm. It carries out the reaction L-histidine = trans-urocanate + NH4(+). It functions in the pathway amino-acid degradation; L-histidine degradation into L-glutamate; N-formimidoyl-L-glutamate from L-histidine: step 1/3. This Bacillus thuringiensis subsp. konkukian (strain 97-27) protein is Histidine ammonia-lyase.